The primary structure comprises 611 residues: ATP-dependent zinc metalloprotease FtsH (611 aa).

Residue methionine 1 is a topological domain, cytoplasmic. The chain crosses the membrane as a helical span at residues 2-22 (VKNLIFWLVITVVLMSIFQNF). Topologically, residues 23-98 (NTNDVNNHKV…IGAIPEEPSL (76 aa)) are extracellular. A helical membrane pass occupies residues 99–119 (FISILISWFPMLLLIGVWIFF). Over 120–611 (MRQMQMGGGK…KGWIETDTNK (492 aa)) the chain is Cytoplasmic. Residue 192–199 (GPPGTGKT) participates in ATP binding. Histidine 414 is a binding site for Zn(2+). The active site involves glutamate 415. Zn(2+) contacts are provided by histidine 418 and aspartate 492.

The protein in the central section; belongs to the AAA ATPase family. In the C-terminal section; belongs to the peptidase M41 family. In terms of assembly, homohexamer. The cofactor is Zn(2+).

The protein resides in the cell membrane. Functionally, acts as a processive, ATP-dependent zinc metallopeptidase for both cytoplasmic and membrane proteins. Plays a role in the quality control of integral membrane proteins. This Buchnera aphidicola subsp. Acyrthosiphon pisum (strain APS) (Acyrthosiphon pisum symbiotic bacterium) protein is ATP-dependent zinc metalloprotease FtsH.